The sequence spans 491 residues: Rab5 GDP/GTP exchange factor (491 aa).

An interaction with ubiquitinated proteins region spans residues 1 to 74 (MSLKSERRGI…EEEAFASSQS (74 aa)). The segment at 13–47 (DQSDLLCKKGCGYYGNPAWQGFCSKCWREEYHKAR) adopts an A20-type zinc-finger fold. Zn(2+) contacts are provided by cysteine 19, cysteine 23, cysteine 35, and cysteine 38. The tract at residues 66-85 (EEAFASSQSSQGAQSLTFSK) is disordered. The span at 69 to 84 (FASSQSSQGAQSLTFS) shows a compositional bias: low complexity. 2 positions are modified to phosphoserine: serine 124 and serine 132. An N6-acetyllysine mark is found at lysine 151 and lysine 170. The region spanning 232-375 (EKKDLAIQKR…IEKLDAQSLN (144 aa)) is the VPS9 domain. A phosphoserine mark is found at serine 373, serine 377, serine 390, and serine 400. Residues 462–491 (PPNQPLAAIDSENVENDKLPPPLQPQVYAG) are disordered.

In terms of assembly, interacts with RGS14; the interaction is GTP-dependent. Heterodimer with RABEP1. The heterodimer binds RAB4A and RAB5A that have been activated by GTP-binding. Interacts with RAB21, and with 100-fold lower affinity also with RAB22. Binds TSC2, GGA1, GGA2, GGA3, AP1G1 and AP1G2. Interacts with ubiquitinated EGFR. Monoubiquitinated.

It is found in the cytoplasm. The protein resides in the early endosome. Its subcellular location is the recycling endosome. Functionally, rab effector protein acting as linker between gamma-adaptin, RAB4A or RAB5A. Involved in endocytic membrane fusion and membrane trafficking of recycling endosomes. Stimulates nucleotide exchange on RAB5A. Can act as a ubiquitin ligase. The polypeptide is Rab5 GDP/GTP exchange factor (RABGEF1) (Homo sapiens (Human)).